A 662-amino-acid chain; its full sequence is DNA ligase (662 aa).

NAD(+) contacts are provided by residues 31–35 (DSEYD), 79–80 (SL), and E119. The active-site N6-AMP-lysine intermediate is the K121. NAD(+) is bound by residues R142, E176, K288, and K312. Residues C405, C408, C421, and C427 each contribute to the Zn(2+) site. The BRCT domain maps to 583–662 (NIEKKLDNLT…DELNSFLDNL (80 aa)).

It belongs to the NAD-dependent DNA ligase family. LigA subfamily. Mg(2+) is required as a cofactor. Requires Mn(2+) as cofactor.

It catalyses the reaction NAD(+) + (deoxyribonucleotide)n-3'-hydroxyl + 5'-phospho-(deoxyribonucleotide)m = (deoxyribonucleotide)n+m + AMP + beta-nicotinamide D-nucleotide.. In terms of biological role, DNA ligase that catalyzes the formation of phosphodiester linkages between 5'-phosphoryl and 3'-hydroxyl groups in double-stranded DNA using NAD as a coenzyme and as the energy source for the reaction. It is essential for DNA replication and repair of damaged DNA. The protein is DNA ligase of Finegoldia magna (strain ATCC 29328 / DSM 20472 / WAL 2508) (Peptostreptococcus magnus).